A 286-amino-acid polypeptide reads, in one-letter code: Phosphatidylserine decarboxylase proenzyme (286 aa).

Active-site charge relay system; for autoendoproteolytic cleavage activity residues include Asp-90, His-147, and Ser-252. Ser-252 (schiff-base intermediate with substrate; via pyruvic acid; for decarboxylase activity) is an active-site residue. Residue Ser-252 is modified to Pyruvic acid (Ser); by autocatalysis.

The protein belongs to the phosphatidylserine decarboxylase family. PSD-B subfamily. Prokaryotic type I sub-subfamily. In terms of assembly, heterodimer of a large membrane-associated beta subunit and a small pyruvoyl-containing alpha subunit. It depends on pyruvate as a cofactor. In terms of processing, is synthesized initially as an inactive proenzyme. Formation of the active enzyme involves a self-maturation process in which the active site pyruvoyl group is generated from an internal serine residue via an autocatalytic post-translational modification. Two non-identical subunits are generated from the proenzyme in this reaction, and the pyruvate is formed at the N-terminus of the alpha chain, which is derived from the carboxyl end of the proenzyme. The autoendoproteolytic cleavage occurs by a canonical serine protease mechanism, in which the side chain hydroxyl group of the serine supplies its oxygen atom to form the C-terminus of the beta chain, while the remainder of the serine residue undergoes an oxidative deamination to produce ammonia and the pyruvoyl prosthetic group on the alpha chain. During this reaction, the Ser that is part of the protease active site of the proenzyme becomes the pyruvoyl prosthetic group, which constitutes an essential element of the active site of the mature decarboxylase.

Its subcellular location is the cell membrane. It catalyses the reaction a 1,2-diacyl-sn-glycero-3-phospho-L-serine + H(+) = a 1,2-diacyl-sn-glycero-3-phosphoethanolamine + CO2. It participates in phospholipid metabolism; phosphatidylethanolamine biosynthesis; phosphatidylethanolamine from CDP-diacylglycerol: step 2/2. Catalyzes the formation of phosphatidylethanolamine (PtdEtn) from phosphatidylserine (PtdSer). This Ectopseudomonas mendocina (strain ymp) (Pseudomonas mendocina) protein is Phosphatidylserine decarboxylase proenzyme.